The sequence spans 801 residues: MEASGKLICRQRQVLFSFLLLGLSLAGAAEPRSYSVVEETEGSSFVTNLAKDLGLEQREFSRRGVRVVSRGNKLHLQLNQETADLLLNEKLDREDLCGHTEPCVLRFQVLLESPFEFFQAELQVIDINDHSPVFLDKQMLVKVSESSPPGTAFPLKNAEDLDIGQNNIENYIISPNSYFRVLTRKRSDGRKYPELVLDKALDREEEAELRLTLTALDGGSPPRSGTAQVYIEVVDVNDNAPEFEQPFYRVQISEDSPISFLVVKVSATDVDTGVNGEISYSLFQASDEISKTFKVDFLTGEIRLKKQLDFEKFQSYEVNIEARDAGGFSGKCTVLIQVIDVNDHAPEVTMSAFTSPIPENAPETVVALFSVSDLDSGENGKISCSIQEDLPFLLKSSVGNFYTLLTETPLDRESRAEYNVTITVTDLGTPRLTTHLNMTVLVSDVNDNAPAFTQTSYTLFVRENNSPALHIGSVSATDRDSGTNAQVTYSLLPPQDPHLPLASLVSINTDNGHLFALRSLDYEALQAFEFRVGASDRGSPALSSEALVRVLVLDANDNSPFVLYPLQNGSAPCTELVPRAAEPGYLVTKVVAVDGDSGQNAWLSYQLLKATEPGLFGVWAHNGEVRTARLLSERDAAKQRLVVLVKDNGEPPCSATATLHVLLVDGFSQPYLPLPEAAPAQGQADSLTVYLVVALASVSSLFLFSVLLFVAVLLCRRSRAASVGRCSVPEGPFPGHLVDVRGTGSLSQNYQYEVCLAGGSGTNEFQLLKPVLPNIQGHSFGPEMEQNSNFRNGFGFSLQLK.

An N-terminal signal peptide occupies residues 1–29 (MEASGKLICRQRQVLFSFLLLGLSLAGAA). Topologically, residues 30–691 (EPRSYSVVEE…GQADSLTVYL (662 aa)) are extracellular. Cadherin domains follow at residues 36-134 (VVEE…SPVF), 139-243 (MLVK…APEF), 248-348 (YRVQ…APEV), 353-452 (FTSP…APAF), and 457-562 (YTLF…SPFV). A disulfide bond links Cys97 and Cys103. N-linked (GlcNAc...) asparagine glycans are attached at residues Asn419 and Asn437. Asn568 is a glycosylation site (N-linked (GlcNAc...) asparagine). One can recognise a Cadherin 6 domain in the interval 569-672 (GSAPCTELVP…LVDGFSQPYL (104 aa)). Residues 692-710 (VVALASVSSLFLFSVLLFV) form a helical membrane-spanning segment. Residues 711–801 (AVLLCRRSRA…NGFGFSLQLK (91 aa)) are Cytoplasmic-facing.

In terms of assembly, forms homodimers in trans (molecules expressed by two different cells). Forms promiscuous heterodimers in cis (at the plasma membrane of the same cell) with other protocadherins.

Its subcellular location is the cell membrane. Its function is as follows. Calcium-dependent cell-adhesion protein involved in cells self-recognition and non-self discrimination. Thereby, it is involved in the establishment and maintenance of specific neuronal connections in the brain. The chain is Protocadherin beta-8 from Homo sapiens (Human).